The following is a 201-amino-acid chain: Small ribosomal subunit protein uS4 (201 aa).

The region spanning 91 to 151 (SRLDNVVYRA…DKSINTLPFE (61 aa)) is the S4 RNA-binding domain.

It belongs to the universal ribosomal protein uS4 family. As to quaternary structure, part of the 30S ribosomal subunit. Contacts protein S5. The interaction surface between S4 and S5 is involved in control of translational fidelity.

In terms of biological role, one of the primary rRNA binding proteins, it binds directly to 16S rRNA where it nucleates assembly of the body of the 30S subunit. Functionally, with S5 and S12 plays an important role in translational accuracy. The sequence is that of Small ribosomal subunit protein uS4 from Mycolicibacterium gilvum (strain PYR-GCK) (Mycobacterium gilvum (strain PYR-GCK)).